Here is a 224-residue protein sequence, read N- to C-terminus: Orotate phosphoribosyltransferase (224 aa).

5-phospho-alpha-D-ribose 1-diphosphate-binding positions include K26, 73-74, R100, K101, K104, H106, and 127-135; these read YK and EDVTTAGTS. T131 and R160 together coordinate orotate.

The protein belongs to the purine/pyrimidine phosphoribosyltransferase family. PyrE subfamily. As to quaternary structure, homodimer. Mg(2+) serves as cofactor.

The enzyme catalyses orotidine 5'-phosphate + diphosphate = orotate + 5-phospho-alpha-D-ribose 1-diphosphate. It functions in the pathway pyrimidine metabolism; UMP biosynthesis via de novo pathway; UMP from orotate: step 1/2. Functionally, catalyzes the transfer of a ribosyl phosphate group from 5-phosphoribose 1-diphosphate to orotate, leading to the formation of orotidine monophosphate (OMP). The chain is Orotate phosphoribosyltransferase from Clostridium acetobutylicum (strain ATCC 824 / DSM 792 / JCM 1419 / IAM 19013 / LMG 5710 / NBRC 13948 / NRRL B-527 / VKM B-1787 / 2291 / W).